Here is an 849-residue protein sequence, read N- to C-terminus: Neprilysin-1 (849 aa).

The Cytoplasmic segment spans residues methionine 1–leucine 113. Residues glutamine 41–glutamine 61 are compositionally biased toward low complexity. Residues glutamine 41–lysine 63 are disordered. Residues leucine 114–phenylalanine 134 traverse the membrane as a helical; Signal-anchor for type II membrane protein segment. The Extracellular segment spans residues alanine 135 to tryptophan 849. Over residues leucine 146 to asparagine 155 the composition is skewed to basic and acidic residues. The disordered stretch occupies residues leucine 146–glutamate 167. The 678-residue stretch at isoleucine 172–tryptophan 849 folds into the Peptidase M13 domain. Cystine bridges form between cysteine 173-cysteine 178, cysteine 196-cysteine 834, cysteine 204-cysteine 794, cysteine 260-cysteine 512, and cysteine 721-cysteine 846. Asparagine 309, asparagine 326, asparagine 393, asparagine 589, and asparagine 599 each carry an N-linked (GlcNAc...) asparagine glycan. A Zn(2+)-binding site is contributed by histidine 684. The active site involves glutamate 685. Residue histidine 688 participates in Zn(2+) binding. Asparagine 709 carries an N-linked (GlcNAc...) asparagine glycan. Position 746 (glutamate 746) interacts with Zn(2+). The Proton donor role is filled by aspartate 750. Asparagine 778 is a glycosylation site (N-linked (GlcNAc...) asparagine).

Belongs to the peptidase M13 family. Zn(2+) serves as cofactor. As to expression, expressed in the testicular tube, near and in the seminal vesicles. In adults and third-instar larvae, expressed in the midgut and in the mushroom bodies of the brain and neurons in the pars intercerebralis. Also expressed in neurons of the ventral ganglion and imaginal disks (wing and leg) of third-instar larvae. In stage 17 embryos, expressed in the peripheral nervous system, pharynx and midgut.

It is found in the cell membrane. The enzyme catalyses Preferential cleavage of polypeptides between hydrophobic residues, particularly with Phe or Tyr at P1'.. Its function is as follows. Metalloendoprotease which functions in fertility and memory formation. Required in the dorsal paired medial neurons and alpha/beta mushroom body neurons for the proper formation of long-term and middle-term memories. Required in males to maximise egg-laying in female mates and is also required in females for their fertility. The protein is Neprilysin-1 of Drosophila melanogaster (Fruit fly).